The sequence spans 211 residues: Thiamine-phosphate synthase (211 aa).

Residues 37 to 41 and Asn69 each bind 4-amino-2-methyl-5-(diphosphooxymethyl)pyrimidine; that span reads QLRIK. Asp70 and Asp89 together coordinate Mg(2+). Ser108 serves as a coordination point for 4-amino-2-methyl-5-(diphosphooxymethyl)pyrimidine. 134 to 136 serves as a coordination point for 2-[(2R,5Z)-2-carboxy-4-methylthiazol-5(2H)-ylidene]ethyl phosphate; it reads TQT. Lys137 contributes to the 4-amino-2-methyl-5-(diphosphooxymethyl)pyrimidine binding site. Residues Gly166 and 186–187 contribute to the 2-[(2R,5Z)-2-carboxy-4-methylthiazol-5(2H)-ylidene]ethyl phosphate site; that span reads VS.

This sequence belongs to the thiamine-phosphate synthase family. Mg(2+) is required as a cofactor.

It carries out the reaction 2-[(2R,5Z)-2-carboxy-4-methylthiazol-5(2H)-ylidene]ethyl phosphate + 4-amino-2-methyl-5-(diphosphooxymethyl)pyrimidine + 2 H(+) = thiamine phosphate + CO2 + diphosphate. The catalysed reaction is 2-(2-carboxy-4-methylthiazol-5-yl)ethyl phosphate + 4-amino-2-methyl-5-(diphosphooxymethyl)pyrimidine + 2 H(+) = thiamine phosphate + CO2 + diphosphate. The enzyme catalyses 4-methyl-5-(2-phosphooxyethyl)-thiazole + 4-amino-2-methyl-5-(diphosphooxymethyl)pyrimidine + H(+) = thiamine phosphate + diphosphate. Its pathway is cofactor biosynthesis; thiamine diphosphate biosynthesis; thiamine phosphate from 4-amino-2-methyl-5-diphosphomethylpyrimidine and 4-methyl-5-(2-phosphoethyl)-thiazole: step 1/1. Condenses 4-methyl-5-(beta-hydroxyethyl)thiazole monophosphate (THZ-P) and 2-methyl-4-amino-5-hydroxymethyl pyrimidine pyrophosphate (HMP-PP) to form thiamine monophosphate (TMP). The sequence is that of Thiamine-phosphate synthase from Escherichia coli O1:K1 / APEC.